The sequence spans 399 residues: Phosphoglycerate kinase (399 aa).

Residues D22 to N24, R38, H61 to R64, R120, and R153 each bind substrate. Residues K204, E326, and G353–T356 contribute to the ATP site.

This sequence belongs to the phosphoglycerate kinase family. In terms of assembly, monomer.

It localises to the cytoplasm. It carries out the reaction (2R)-3-phosphoglycerate + ATP = (2R)-3-phospho-glyceroyl phosphate + ADP. It participates in carbohydrate degradation; glycolysis; pyruvate from D-glyceraldehyde 3-phosphate: step 2/5. The protein is Phosphoglycerate kinase of Geotalea daltonii (strain DSM 22248 / JCM 15807 / FRC-32) (Geobacter daltonii).